The following is a 166-amino-acid chain: Heavy metal-associated isoprenylated plant protein 45 (166 aa).

The 64-residue stretch at 15 to 78 (LSIVELLVDM…MVKRTGRTAE (64 aa)) folds into the HMA domain. 2 residues coordinate a metal cation: Cys26 and Cys29. Cys163 is subject to Cysteine methyl ester. Residue Cys163 is the site of S-farnesyl cysteine attachment. A propeptide spans 164–166 (TIM) (removed in mature form).

This sequence belongs to the HIPP family.

Functionally, heavy-metal-binding protein. The sequence is that of Heavy metal-associated isoprenylated plant protein 45 from Arabidopsis thaliana (Mouse-ear cress).